Here is a 452-residue protein sequence, read N- to C-terminus: Exodeoxyribonuclease 7 large subunit (452 aa).

Belongs to the XseA family. In terms of assembly, heterooligomer composed of large and small subunits.

It is found in the cytoplasm. The catalysed reaction is Exonucleolytic cleavage in either 5'- to 3'- or 3'- to 5'-direction to yield nucleoside 5'-phosphates.. In terms of biological role, bidirectionally degrades single-stranded DNA into large acid-insoluble oligonucleotides, which are then degraded further into small acid-soluble oligonucleotides. The sequence is that of Exodeoxyribonuclease 7 large subunit from Lysinibacillus sphaericus (strain C3-41).